Here is a 463-residue protein sequence, read N- to C-terminus: Chromosomal replication initiator protein DnaA (463 aa).

A domain I, interacts with DnaA modulators region spans residues 1–83 (MSTNQIILTD…LQLFQHYNNT (83 aa)). A domain II region spans residues 83–124 (TIKSIEIITKELPGTTQTVTELPTKTFADIGSSELNSENIFS). The segment at 125–343 (TLDARFTFDN…GALNKVIAHS (219 aa)) is domain III, AAA+ region. ATP contacts are provided by Gly171, Gly173, Lys174, and Thr175. Residues 344–463 (NFTLKEITLE…INLLMKILQN (120 aa)) form a domain IV, binds dsDNA region.

Belongs to the DnaA family. In terms of assembly, oligomerizes as a right-handed, spiral filament on DNA at oriC.

It is found in the cytoplasm. Functionally, plays an essential role in the initiation and regulation of chromosomal replication. ATP-DnaA binds to the origin of replication (oriC) to initiate formation of the DNA replication initiation complex once per cell cycle. Binds the DnaA box (a 9 base pair repeat at the origin) and separates the double-stranded (ds)DNA. Forms a right-handed helical filament on oriC DNA; dsDNA binds to the exterior of the filament while single-stranded (ss)DNA is stabiized in the filament's interior. The ATP-DnaA-oriC complex binds and stabilizes one strand of the AT-rich DNA unwinding element (DUE), permitting loading of DNA polymerase. After initiation quickly degrades to an ADP-DnaA complex that is not apt for DNA replication. Binds acidic phospholipids. The polypeptide is Chromosomal replication initiator protein DnaA (Rickettsia peacockii (strain Rustic)).